A 596-amino-acid polypeptide reads, in one-letter code: Putative terpenoid synthase 5 (596 aa).

Residues Asp349, Asp353, Asn481, and Asp489 each coordinate Mg(2+). The DDXXD motif signature appears at 349 to 353; that stretch reads DDTCD.

It belongs to the terpene synthase family. Tpsa subfamily. Mg(2+) is required as a cofactor. It depends on Mn(2+) as a cofactor.

It localises to the cytoplasm. The protein operates within secondary metabolite biosynthesis; terpenoid biosynthesis. This chain is Putative terpenoid synthase 5 (TPS05), found in Arabidopsis thaliana (Mouse-ear cress).